The chain runs to 191 residues: UPF0312 protein Sputcn32_2702 (191 aa).

The first 22 residues, 1–22 (MKKQLLSALIGVSLLAPMAASA), serve as a signal peptide directing secretion.

This sequence belongs to the UPF0312 family. Type 1 subfamily.

Its subcellular location is the periplasm. The sequence is that of UPF0312 protein Sputcn32_2702 from Shewanella putrefaciens (strain CN-32 / ATCC BAA-453).